A 706-amino-acid chain; its full sequence is Phenylalanine--tRNA ligase beta subunit, chloroplastic (706 aa).

The B5 domain maps to 300–388 (KVLKPIVLNY…RLHGFNNFLT (89 aa)). Mg(2+)-binding residues include Asp-366, Asp-372, Glu-375, and Glu-376. The region spanning 612–705 (SVYPKIVKDL…LELKVQAILR (94 aa)) is the FDX-ACB domain.

It belongs to the phenylalanyl-tRNA synthetase beta subunit family. Type 1 subfamily. Tetramer of two alpha and two beta subunits. The cofactor is Mg(2+).

Its subcellular location is the plastid. It localises to the chloroplast. The enzyme catalyses tRNA(Phe) + L-phenylalanine + ATP = L-phenylalanyl-tRNA(Phe) + AMP + diphosphate + H(+). The polypeptide is Phenylalanine--tRNA ligase beta subunit, chloroplastic (Phaeodactylum tricornutum (strain CCAP 1055/1)).